Consider the following 264-residue polypeptide: S-adenosylmethionine decarboxylase proenzyme (264 aa).

Serine 113 acts as the Schiff-base intermediate with substrate; via pyruvic acid in catalysis. Position 113 is a pyruvic acid (Ser); by autocatalysis (serine 113). Histidine 118 (proton acceptor; for processing activity) is an active-site residue. Cysteine 141 functions as the Proton donor; for catalytic activity in the catalytic mechanism.

The protein belongs to the prokaryotic AdoMetDC family. Type 2 subfamily. In terms of assembly, heterooctamer of four alpha and four beta chains arranged as a tetramer of alpha/beta heterodimers. Requires pyruvate as cofactor. In terms of processing, is synthesized initially as an inactive proenzyme. Formation of the active enzyme involves a self-maturation process in which the active site pyruvoyl group is generated from an internal serine residue via an autocatalytic post-translational modification. Two non-identical subunits are generated from the proenzyme in this reaction, and the pyruvate is formed at the N-terminus of the alpha chain, which is derived from the carboxyl end of the proenzyme. The post-translation cleavage follows an unusual pathway, termed non-hydrolytic serinolysis, in which the side chain hydroxyl group of the serine supplies its oxygen atom to form the C-terminus of the beta chain, while the remainder of the serine residue undergoes an oxidative deamination to produce ammonia and the pyruvoyl group blocking the N-terminus of the alpha chain.

The enzyme catalyses S-adenosyl-L-methionine + H(+) = S-adenosyl 3-(methylsulfanyl)propylamine + CO2. The protein operates within amine and polyamine biosynthesis; S-adenosylmethioninamine biosynthesis; S-adenosylmethioninamine from S-adenosyl-L-methionine: step 1/1. Its function is as follows. Catalyzes the decarboxylation of S-adenosylmethionine to S-adenosylmethioninamine (dcAdoMet), the propylamine donor required for the synthesis of the polyamines spermine and spermidine from the diamine putrescine. In Xanthomonas oryzae pv. oryzae (strain MAFF 311018), this protein is S-adenosylmethionine decarboxylase proenzyme.